The chain runs to 529 residues: uncharacterized protein (529 aa).

The active-site Nucleophile is Asp-389. The active site involves Glu-392. Asp-459 (proton donor) is an active-site residue.

It belongs to the glycosyl hydrolase 31 family.

This is an uncharacterized protein from Pseudescherichia vulneris (Escherichia vulneris).